Reading from the N-terminus, the 423-residue chain is Serine--tRNA ligase (423 aa).

229 to 231 (TAE) contributes to the L-serine binding site. 260–262 (RRE) provides a ligand contact to ATP. Position 283 (E283) interacts with L-serine. Residue 347–350 (EISS) participates in ATP binding. An L-serine-binding site is contributed by S383.

The protein belongs to the class-II aminoacyl-tRNA synthetase family. Type-1 seryl-tRNA synthetase subfamily. In terms of assembly, homodimer. The tRNA molecule binds across the dimer.

Its subcellular location is the cytoplasm. The catalysed reaction is tRNA(Ser) + L-serine + ATP = L-seryl-tRNA(Ser) + AMP + diphosphate + H(+). It carries out the reaction tRNA(Sec) + L-serine + ATP = L-seryl-tRNA(Sec) + AMP + diphosphate + H(+). Its pathway is aminoacyl-tRNA biosynthesis; selenocysteinyl-tRNA(Sec) biosynthesis; L-seryl-tRNA(Sec) from L-serine and tRNA(Sec): step 1/1. Its function is as follows. Catalyzes the attachment of serine to tRNA(Ser). Is also able to aminoacylate tRNA(Sec) with serine, to form the misacylated tRNA L-seryl-tRNA(Sec), which will be further converted into selenocysteinyl-tRNA(Sec). The chain is Serine--tRNA ligase from Trichlorobacter lovleyi (strain ATCC BAA-1151 / DSM 17278 / SZ) (Geobacter lovleyi).